The sequence spans 107 residues: uncharacterized protein (107 aa).

A compositionally biased stretch (polar residues) spans 80 to 98; sequence SIDNLKPTSHQNGTTNDTA. The disordered stretch occupies residues 80-107; it reads SIDNLKPTSHQNGTTNDTATMDHLEKNE.

This is an uncharacterized protein from Human spumaretrovirus (SFVcpz(hu)).